Consider the following 336-residue polypeptide: Protein-arginine N-acetylglucosaminyltransferase SseK1 (336 aa).

N-beta-linked (GlcNAc) arginine; by autocatalysis glycosylation is present at Arg-24. UDP-N-acetyl-alpha-D-glucosamine-binding positions include 50 to 52 and Tyr-74; that span reads QWF. A glycan (N-beta-linked (GlcNAc) arginine; by autocatalysis) is linked at Arg-152. The DXD motif motif lies at 223–225; it reads DAD. Residue 224–225 participates in UDP-N-acetyl-alpha-D-glucosamine binding; it reads AD. Asp-225 contacts Mn(2+). Glu-255 functions as the Proton acceptor in the catalytic mechanism. Mn(2+)-binding residues include Asn-322 and Ser-324. UDP-N-acetyl-alpha-D-glucosamine is bound by residues Ser-324 and Ser-329. Arg-333 carries N-beta-linked (GlcNAc) arginine; by autocatalysis glycosylation.

It belongs to the glycosyltransferase NleB family. Mn(2+) serves as cofactor. Post-translationally, auto-glycosylated: arginine GlcNAcylation is required for activity toward death domain-containing host target proteins.

It is found in the secreted. The protein resides in the host cytoplasm. It localises to the host cytosol. The enzyme catalyses L-arginyl-[protein] + UDP-N-acetyl-alpha-D-glucosamine = N(omega)-(N-acetyl-beta-D-glucosaminyl)-L-arginyl-[protein] + UDP + H(+). With respect to regulation, protein-arginine N-acetylglucosaminyltransferase activity is inhibited by 100066N compound (flavone analog) and 102644N compound (a substituted isoxazole). Its function is as follows. Protein-arginine N-acetylglucosaminyltransferase effector that disrupts TNF signaling in infected cells, including NF-kappa-B signaling, apoptosis and necroptosis. Acts by catalyzing the transfer of a single N-acetylglucosamine (GlcNAc) to a conserved arginine residue in the death domain of host proteins TRADD and, to a lower extent, FADD: arginine GlcNAcylation prevents homotypic/heterotypic death domain interactions and assembly of the oligomeric TNF-alpha receptor complex, thereby disrupting TNF signaling. Also acts on host proteins without a death domain: catalyzes arginine GlcNAcylation of host GAPDH protein, thereby preventing GAPDH interaction with TRAF2, leading to inhibit NF-kappa-B signaling. Catalyzes GlcNAcylation of host tubulin-folding cofactor TBCB, thereby promoting microtubule stability. Also mediates auto-GlcNAcylation, which is required for activity toward death domain-containing host target proteins. The protein is Protein-arginine N-acetylglucosaminyltransferase SseK1 of Salmonella enteritidis (strain 2009K0958).